Reading from the N-terminus, the 429-residue chain is Uracil permease (429 aa).

The Cytoplasmic segment spans residues 1–13 (MTRRAIGVSERPP). Residues 14-37 (LLQTIPLSLQHLFAMFGATVLVPV) traverse the membrane as a helical segment. The Periplasmic portion of the chain corresponds to 38–41 (LFHI). The helical transmembrane segment at 42 to 61 (NPATVLLFNGIGTLLYLFIC) threads the bilayer. Over 62–64 (KGK) the chain is Cytoplasmic. The chain crosses the membrane as a discontinuously helical span at residues 65–81 (IPAYLGSSFAFISPVLL). Position 73 (phenylalanine 73) interacts with uracil. The Periplasmic segment spans residues 82-89 (LLPLGYEV). Residues 90-110 (ALGGFIMCGVLFCLVSFIVKK) form a helical membrane-spanning segment. Residues 111 to 122 (AGTGWLDVLFPP) lie on the Cytoplasmic side of the membrane. A helical membrane pass occupies residues 123 to 144 (AAMGAIVAVIGLELAGVAAGMA). Topologically, residues 145–155 (GLLPAEGQTPD) are periplasmic. Residues 156–171 (SKTIIISITTLAVTVL) traverse the membrane as a helical segment. The Cytoplasmic portion of the chain corresponds to 172–178 (GSVLFRG). The chain crosses the membrane as a helical span at residues 179–199 (FLAIIPILIGVLVGYALSFAM). Residues 200 to 224 (GIVDTTPIINAHWFALPTLYTPRFE) lie on the Periplasmic side of the membrane. The chain crosses the membrane as a helical span at residues 225–248 (WFAILTILPAALVVIAEHVGHLVV). Glutamate 241 is a binding site for uracil. At 249-261 (TANIVKKDLLRDP) the chain is on the cytoplasmic side. The chain crosses the membrane as a helical span at residues 262 to 281 (GLHRSMFANGLSTVISGFFG). Residues 282 to 298 (STPNTTYGENIGVMAIT) traverse the membrane as a discontinuously helical segment. Uracil-binding residues include glycine 289 and glutamate 290. At 299-301 (RVY) the chain is on the cytoplasmic side. A helical membrane pass occupies residues 302–319 (STWVIGGAAIFAILLSCV). Over 320–332 (GKLAAAIQMIPLP) the chain is Periplasmic. A helical membrane pass occupies residues 333–354 (VMGGVSLLLYGVIGASGIRVLI). At 355-365 (ESKVDYNKAQN) the chain is on the cytoplasmic side. The discontinuously helical intramembrane region spans 366–401 (LILTSVILIIGVSGAKVNIGAAELKGMALATIVGIG). Topologically, residues 402 to 429 (LSLIFKLISVLRPEEVVLDAEDADITDK) are cytoplasmic.

Belongs to the nucleobase:cation symporter-2 (NCS2) (TC 2.A.40) family.

Its subcellular location is the cell inner membrane. It catalyses the reaction uracil(in) + H(+)(in) = uracil(out) + H(+)(out). Functionally, transport of uracil in the cell. The protein is Uracil permease (uraA) of Escherichia coli O157:H7.